The primary structure comprises 124 residues: uncharacterized protein (124 aa).

2 disordered regions span residues 1–31 (MAQH…TMKP) and 59–124 (EDAR…YPQP). Polar residues-rich tracts occupy residues 65–86 (GMSS…SDAA) and 98–124 (TGEQ…YPQP).

This is an uncharacterized protein from Bos taurus (Bovine).